The chain runs to 122 residues: Small ribosomal subunit protein uS13 (122 aa).

Residues His92 to Lys122 form a disordered region. The span at Gln101–Lys122 shows a compositional bias: basic residues.

Belongs to the universal ribosomal protein uS13 family. As to quaternary structure, part of the 30S ribosomal subunit. Forms a loose heterodimer with protein S19. Forms two bridges to the 50S subunit in the 70S ribosome.

Located at the top of the head of the 30S subunit, it contacts several helices of the 16S rRNA. In the 70S ribosome it contacts the 23S rRNA (bridge B1a) and protein L5 of the 50S subunit (bridge B1b), connecting the 2 subunits; these bridges are implicated in subunit movement. Contacts the tRNAs in the A and P-sites. The protein is Small ribosomal subunit protein uS13 of Ruminiclostridium cellulolyticum (strain ATCC 35319 / DSM 5812 / JCM 6584 / H10) (Clostridium cellulolyticum).